Here is a 418-residue protein sequence, read N- to C-terminus: Metacaspase-4 (418 aa).

Catalysis depends on residues histidine 86 and cysteine 139. The residue at position 139 (cysteine 139) is an S-nitrosocysteine. The segment at 153–172 (GESTKKEAEDEDESEESSSR) is disordered.

The protein belongs to the peptidase C14B family. The two subunits are derived from the precursor sequence by an autocatalytic mechanism. Expressed in roots, cotyledons, leaves, cauline leaves, pollen and embryos.

Its subcellular location is the cytoplasm. The protein localises to the cytosol. With respect to regulation, activated by Ca(2+) which induces self-processing and accelerates the rate of the enzyme activity, but has no effect on Km. Cysteine protease that cleaves specifically after arginine or lysine residues. Does not cleave caspase-specific substrates. Plays a positive regulatory role in biotic and abiotic stress-induced programmed cell death. The sequence is that of Metacaspase-4 (AMC4) from Arabidopsis thaliana (Mouse-ear cress).